The primary structure comprises 403 residues: Cell cycle checkpoint control protein RAD9B (403 aa).

The tract at residues 285–347 (PLSQARRSHP…ASAGQDDIFE (63 aa)) is disordered. Ser354 and Ser363 each carry phosphoserine.

The protein belongs to the rad9 family. As to quaternary structure, interacts with HUS1, HUS1B, RAD1, RAD9A and RAD17.

The sequence is that of Cell cycle checkpoint control protein RAD9B (Rad9b) from Mus musculus (Mouse).